Reading from the N-terminus, the 120-residue chain is NAD(P)H-quinone oxidoreductase subunit 3, chloroplastic (120 aa).

3 helical membrane-spanning segments follow: residues 9 to 29 (IFWAFLLISSAIPVLAFLISG), 64 to 84 (MFALVFVVFDVETVFLYPWAM), and 88 to 108 (VLGVSAFIEAFIFVLILILGL).

Belongs to the complex I subunit 3 family. In terms of assembly, NDH is composed of at least 16 different subunits, 5 of which are encoded in the nucleus.

Its subcellular location is the plastid. The protein localises to the chloroplast thylakoid membrane. It carries out the reaction a plastoquinone + NADH + (n+1) H(+)(in) = a plastoquinol + NAD(+) + n H(+)(out). The catalysed reaction is a plastoquinone + NADPH + (n+1) H(+)(in) = a plastoquinol + NADP(+) + n H(+)(out). NDH shuttles electrons from NAD(P)H:plastoquinone, via FMN and iron-sulfur (Fe-S) centers, to quinones in the photosynthetic chain and possibly in a chloroplast respiratory chain. The immediate electron acceptor for the enzyme in this species is believed to be plastoquinone. Couples the redox reaction to proton translocation, and thus conserves the redox energy in a proton gradient. In Arabidopsis thaliana (Mouse-ear cress), this protein is NAD(P)H-quinone oxidoreductase subunit 3, chloroplastic.